The following is a 212-amino-acid chain: Interleukin-6 (212 aa).

Positions 1–27 (MNSVSTSAFGPVAFSLGLLLVLPAAFP) are cleaved as a signal peptide. Cys-72 and Cys-78 form a disulfide bridge. The N-linked (GlcNAc...) asparagine glycan is linked to Asn-73. A Phosphoserine modification is found at Ser-81. The cysteines at positions 101 and 111 are disulfide-linked. An N-linked (GlcNAc...) asparagine glycan is attached at Asn-172.

Belongs to the IL-6 superfamily. In terms of assembly, component of a hexamer of two molecules each of IL6, IL6R and IL6ST; first binds to IL6R to associate with the signaling subunit IL6ST. Interacts with IL6R (via the N-terminal ectodomain); this interaction may be affected by IL6R-binding with SORL1, hence decreasing IL6 cis signaling. Interacts with SORL1 (via the N-terminal ectodomain); this interaction leads to IL6 internalization and lysosomal degradation. May form a trimeric complex with the soluble SORL1 ectodomain and soluble IL6R receptor; this interaction might stabilize circulating IL6, hence promoting IL6 trans signaling.

The protein resides in the secreted. In terms of biological role, cytokine with a wide variety of biological functions in immunity, tissue regeneration, and metabolism. Binds to IL6R, then the complex associates to the signaling subunit IL6ST/gp130 to trigger the intracellular IL6-signaling pathway. The interaction with the membrane-bound IL6R and IL6ST stimulates 'classic signaling', whereas the binding of IL6 and soluble IL6R to IL6ST stimulates 'trans-signaling'. Alternatively, 'cluster signaling' occurs when membrane-bound IL6:IL6R complexes on transmitter cells activate IL6ST receptors on neighboring receiver cells. IL6 is a potent inducer of the acute phase response. Rapid production of IL6 contributes to host defense during infection and tissue injury, but excessive IL6 synthesis is involved in disease pathology. In the innate immune response, is synthesized by myeloid cells, such as macrophages and dendritic cells, upon recognition of pathogens through toll-like receptors (TLRs) at the site of infection or tissue injury. In the adaptive immune response, is required for the differentiation of B cells into immunoglobulin-secreting cells. Plays a major role in the differentiation of CD4(+) T cell subsets. Essential factor for the development of T follicular helper (Tfh) cells that are required for the induction of germinal-center formation. Required to drive naive CD4(+) T cells to the Th17 lineage. Also required for proliferation of myeloma cells and the survival of plasmablast cells. Its function is as follows. Acts as an essential factor in bone homeostasis and on vessels directly or indirectly by induction of VEGF, resulting in increased angiogenesis activity and vascular permeability. Induces, through 'trans-signaling' and synergistically with IL1B and TNF, the production of VEGF. Involved in metabolic controls, is discharged into the bloodstream after muscle contraction increasing lipolysis and improving insulin resistance. 'Trans-signaling' in central nervous system also regulates energy and glucose homeostasis. Mediates, through GLP-1, crosstalk between insulin-sensitive tissues, intestinal L cells and pancreatic islets to adapt to changes in insulin demand. Also acts as a myokine. Plays a protective role during liver injury, being required for maintenance of tissue regeneration. Also has a pivotal role in iron metabolism by regulating HAMP/hepcidin expression upon inflammation or bacterial infection. Through activation of IL6ST-YAP-NOTCH pathway, induces inflammation-induced epithelial regeneration. The polypeptide is Interleukin-6 (IL6) (Macaca thibetana (Pere David's macaque)).